Consider the following 119-residue polypeptide: Bombesin (119 aa).

A signal peptide spans 1–29 (MSAIPLNRILPLGFLFHLLIFSFISLSSC). Positions 30–44 (MEFVEDPNNQGRISL) are excised as a propeptide. Met-58 carries the methionine amide modification. The propeptide occupies 62–119 (SLQDTDFEEMESFAKRNVENMRAALLQEQNRAESERELRHAQLVVRNILEQYLKNMQN).

The protein belongs to the bombesin/neuromedin-B/ranatensin family. As to expression, localized to the cutaneous granular glands in the skin and the brain.

Its subcellular location is the secreted. Its function is as follows. Stimulates smooth muscle contraction. Role in induction of hypothermia, stimulation of DNA replication and release of many gastrointestinal hormones. The sequence is that of Bombesin from Bombina orientalis (Oriental fire-bellied toad).